A 249-amino-acid chain; its full sequence is Vesicle-associated membrane protein-associated protein A (249 aa).

Ala2 is subject to N-acetylalanine. The Cytoplasmic portion of the chain corresponds to Ala2–Pro227. One can recognise an MSP domain in the interval Ile14–Glu131. Residues Lys50–Thr53 are phosphorylated FFAT motif binding. Lys125 is subject to N6-acetyllysine. The span at Glu135–Pro144 shows a compositional bias: basic and acidic residues. A disordered region spans residues Glu135 to Ser166. Ser166 is modified (phosphoserine). A coiled-coil region spans residues Asn168–Ala207. The residue at position 170 (Thr170) is a Phosphothreonine. Ser214, Ser216, and Ser219 each carry phosphoserine. Residues Leu228–Ile248 traverse the membrane as a helical; Anchor for type IV membrane protein segment.

It belongs to the VAMP-associated protein (VAP) (TC 9.B.17) family. As to quaternary structure, homodimer; disulfide-linked. Heterodimer with VAPB. Interacts with VAMP1, VAMP2, STX1A, BET1, SEC22C and with the C-terminal domain of OCLN. Interacts (via MSP domain) with OSBPL1A (via FFAT motif). Interacts (via MSP domain) with ZFYVE27; may retain ZFYVE27 in the endoplasmic reticulum and regulate its function in cell projections formation. Interacts with OSBP. Interacts (via C-terminus) with RSAD2/viperin (via C-terminus). Interacts with IFITM3. Interacts with OSBPL3 (phosphorylated form). Interacts with KIF5A in a ZFYVE27-dependent manner. Interacts (via MSP domain) with STARD3 (via phosphorylated FFAT motif); this interaction recruits VAPA to the endosome. Interacts with STARD3NL (via FFAT motif). Interacts with CERT1. Interacts with PLEKHA3 and SACM1L to form a ternary complex. Interacts with VPS13A (via FFAT motif). Interacts with RB1CC1 (via phosphorylated FFAT motif), MIGA2 (via phosphorylated FFAT motif), RMDN3 (via phosphorylated FFAT motif), KCNB1 (via phosphorylated FFAT motif) and KCNB2 (via phosphorylated FFAT motif). Interacts (via MSP domain) with WDR44; the interactions connect the endoplasmic reticulum (ER) with the endosomal tubule. In terms of tissue distribution, ubiquitous.

It is found in the endoplasmic reticulum membrane. The protein resides in the cell membrane. Its subcellular location is the cell junction. It localises to the tight junction. The protein localises to the nucleus membrane. Functionally, endoplasmic reticulum (ER)-anchored protein that mediates the formation of contact sites between the ER and endosomes via interaction with FFAT motif-containing proteins such as STARD3 or WDR44. STARD3-VAPA interaction enables cholesterol transfer from the ER to endosomes. Via interaction with WDR44 participates in neosynthesized protein export. In addition, recruited to the plasma membrane through OSBPL3 binding. The OSBPL3-VAPA complex stimulates RRAS signaling which in turn attenuates integrin beta-1 (ITGB1) activation at the cell surface. With OSBPL3, may regulate ER morphology. May play a role in vesicle trafficking. The protein is Vesicle-associated membrane protein-associated protein A of Rattus norvegicus (Rat).